A 72-amino-acid chain; its full sequence is Translation initiation factor IF-1 (72 aa).

The S1-like domain occupies 1-72 (MAKEDCIEMQ…SKARIIFRAR (72 aa)).

It belongs to the IF-1 family. In terms of assembly, component of the 30S ribosomal translation pre-initiation complex which assembles on the 30S ribosome in the order IF-2 and IF-3, IF-1 and N-formylmethionyl-tRNA(fMet); mRNA recruitment can occur at any time during PIC assembly.

The protein localises to the cytoplasm. In terms of biological role, one of the essential components for the initiation of protein synthesis. Stabilizes the binding of IF-2 and IF-3 on the 30S subunit to which N-formylmethionyl-tRNA(fMet) subsequently binds. Helps modulate mRNA selection, yielding the 30S pre-initiation complex (PIC). Upon addition of the 50S ribosomal subunit IF-1, IF-2 and IF-3 are released leaving the mature 70S translation initiation complex. The protein is Translation initiation factor IF-1 of Actinobacillus pleuropneumoniae serotype 5b (strain L20).